Consider the following 403-residue polypeptide: Na(+)/H(+) antiporter NhaA (403 aa).

11 consecutive transmembrane segments (helical) span residues 23-43, 66-86, 101-121, 132-152, 161-181, 184-204, 219-239, 257-277, 297-317, 333-353, and 363-383; these read AFFL…PWAA, VAAW…ILEI, VALP…TYLL, GWAI…LALG, AWLM…IALF, GSMY…LIGA, GILL…AGVI, WVSS…FGFM, LGIM…ATLL, GMLF…LFVA, and IAPA…TGWF.

It belongs to the NhaA Na(+)/H(+) (TC 2.A.33) antiporter family.

Its subcellular location is the cell inner membrane. It carries out the reaction Na(+)(in) + 2 H(+)(out) = Na(+)(out) + 2 H(+)(in). Functionally, na(+)/H(+) antiporter that extrudes sodium in exchange for external protons. This chain is Na(+)/H(+) antiporter NhaA, found in Gluconobacter oxydans (strain 621H) (Gluconobacter suboxydans).